The sequence spans 458 residues: Putative U-box domain-containing protein 46 (458 aa).

The U-box domain occupies 71–144; sequence EVPKEFICTL…TQWCLVNKYD (74 aa). ARM repeat units follow at residues 241 to 281 and 283 to 322; these read ESNK…SLSA and DSNK…NLCI.

It carries out the reaction S-ubiquitinyl-[E2 ubiquitin-conjugating enzyme]-L-cysteine + [acceptor protein]-L-lysine = [E2 ubiquitin-conjugating enzyme]-L-cysteine + N(6)-ubiquitinyl-[acceptor protein]-L-lysine.. It participates in protein modification; protein ubiquitination. Functionally, functions as an E3 ubiquitin ligase. This Arabidopsis thaliana (Mouse-ear cress) protein is Putative U-box domain-containing protein 46 (PUB46).